The primary structure comprises 155 residues: MMSSLCGMPLTYLLTAAVLSLSLTDACFIRNCPKGGKRSLDTGMVTSRECMKCGPGGTGQCVGPSICCGQDFGCHVGTAEAAVCQQENDSSTPCLVKGEACGSRDAGNCVADGICCDSESCAVNDRCRDLDGNAQANRGDLIQLIHKLLKVRDYD.

Residues 1–26 form the signal peptide; the sequence is MMSSLCGMPLTYLLTAAVLSLSLTDA. C27 and C32 form a disulfide bridge. G35 carries the glycine amide modification. 7 disulfide bridges follow: C50–C94, C53–C67, C61–C84, C68–C74, C101–C115, C109–C127, and C116–C121. N-linked (GlcNAc...) asparagine glycosylation is present at N88.

It belongs to the vasopressin/oxytocin family. Seven disulfide bonds are present in neurophysin.

The protein localises to the secreted. This is Conopressin/neurophysin from Lymnaea stagnalis (Great pond snail).